The sequence spans 258 residues: UPF0246 protein YaaA (258 aa).

The protein belongs to the UPF0246 family.

This chain is UPF0246 protein YaaA, found in Escherichia coli O7:K1 (strain IAI39 / ExPEC).